The following is a 221-amino-acid chain: MRLILLGAPGAGKGTQAQFICEKFAIPQISTGDMLRAAVKARTELGVAAKKIMDAGGLVSDDIIIGLVKDRLTQPDCSKGYLFDGFPRTIPQAQVMKDAGVPIDYVLEIDVPFDAIIDRMGGRRVHLASGRTYHIKFNPPKVEGKDDITGDPLIQRDDDKEETVRKRLQVYDDQTRPLVEYYSSWAAQANPADKVKAPTYRKVSGTSSVEDITASIFAALK.

10 to 15 is an ATP binding site; that stretch reads GAGKGT. An NMP region spans residues 30 to 59; it reads STGDMLRAAVKARTELGVAAKKIMDAGGLV. AMP-binding positions include Thr-31, Arg-36, 57 to 59, 85 to 88, and Gln-92; these read GLV and GFPR. The interval 122-159 is LID; sequence GRRVHLASGRTYHIKFNPPKVEGKDDITGDPLIQRDDD. ATP contacts are provided by residues Arg-123 and 132 to 133; that span reads TY. Residues Arg-156 and Arg-167 each contribute to the AMP site. Ser-207 provides a ligand contact to ATP.

This sequence belongs to the adenylate kinase family. In terms of assembly, monomer.

The protein localises to the cytoplasm. The catalysed reaction is AMP + ATP = 2 ADP. It functions in the pathway purine metabolism; AMP biosynthesis via salvage pathway; AMP from ADP: step 1/1. In terms of biological role, catalyzes the reversible transfer of the terminal phosphate group between ATP and AMP. Plays an important role in cellular energy homeostasis and in adenine nucleotide metabolism. In Polynucleobacter necessarius subsp. necessarius (strain STIR1), this protein is Adenylate kinase.